Consider the following 81-residue polypeptide: Trefoil factor 1 (81 aa).

An N-terminal signal peptide occupies residues 1 to 21 (MEHKVTCVLAMVLMLALSSLA). Glutamine 22 is subject to Pyrrolidone carboxylic acid. The region spanning 26–69 (ETCAVIPRERINCGFPGVTAQQCKEKGCCFDDSVRGFPWCFRPL) is the P-type domain. Disulfide bonds link cysteine 28–cysteine 54, cysteine 38–cysteine 53, and cysteine 48–cysteine 65.

Its subcellular location is the secreted. In terms of biological role, stabilizer of the mucous gel overlying the gastrointestinal mucosa that provides a physical barrier against various noxious agents. This chain is Trefoil factor 1 (Tff1), found in Rattus norvegicus (Rat).